A 702-amino-acid polypeptide reads, in one-letter code: MNSLFASTARGLEELLKTELEKLGAVECQVVQGGVHFQGDTRLIYQSLMWSRLASRIILPMGECKVYSDLDLYLGVQAINWTEIFNPGATFAVHFSGLNDTIRNSQYGAMKVKDAIVDAFTRKNLPRPNVDRESPDLRINVWLNKETASIALDLSGDGLHLRGYRDRAGLAPIKETLAAAIVMRSGWQPGTPLLDPMCGSGTLLIEAAMWATDRAPGLHRGHWGFSGWAQHDETIWQEVKAEAQTRARKGLAEYSSHFYGSDSDARVIERARSNARRAGIGELITFEVKDVAQLSNPLPKGPYGTVISNPPYGERLDSEPALIALHSLLGRIMKNQFGGWNLSLFSASPDLLGSLQLRADKQFKAKNGPLDCVQKNYHIAETTADSKPATVAEDYANRLRKNLKKLEKWARQEGIECYRLYDADLPEYNVAVDRYGDWAVIQEYAPPKTVDAQKARQRLFDIIAATLSVLGIPPNKLVLKTRERQKGKNQYQKMSEKGEFLEVSEYNARLWVNLTDYLDTGLFLDHRIARRMLGEMSQGKDFLNLFSYTGSASVHAGLGGARSTTTVDMSRTYLEWAERNLRLNGLSGRAHRLIQADCLGWLREANEQFDLIFIDPPTFSNSKRMEASFDVQRDHVALMKDLKRLLRKGGTIMFSNNKRGFRMDLEGLAELGLTAQEITQKTLSPDFARNRQIHNCWLICAA.

A THUMP domain is found at 43–154; sequence LIYQSLMWSR…KETASIALDL (112 aa).

It belongs to the methyltransferase superfamily. RlmKL family.

The protein localises to the cytoplasm. It carries out the reaction guanosine(2445) in 23S rRNA + S-adenosyl-L-methionine = N(2)-methylguanosine(2445) in 23S rRNA + S-adenosyl-L-homocysteine + H(+). The catalysed reaction is guanosine(2069) in 23S rRNA + S-adenosyl-L-methionine = N(2)-methylguanosine(2069) in 23S rRNA + S-adenosyl-L-homocysteine + H(+). Specifically methylates the guanine in position 2445 (m2G2445) and the guanine in position 2069 (m7G2069) of 23S rRNA. This Salmonella arizonae (strain ATCC BAA-731 / CDC346-86 / RSK2980) protein is Ribosomal RNA large subunit methyltransferase K/L.